The chain runs to 515 residues: Maturase K (515 aa).

Belongs to the intron maturase 2 family. MatK subfamily.

The protein localises to the plastid. It is found in the chloroplast. Its function is as follows. Usually encoded in the trnK tRNA gene intron. Probably assists in splicing its own and other chloroplast group II introns. The polypeptide is Maturase K (Pinus leiophylla (Chihuahua pine)).